The following is a 75-amino-acid chain: MSSGGLLLLLGLLTLWAELTPISGQDRPKKPGLRPPRPQKPPCVRECKNDWRCPGEQKCCRYGCIYECRDPIFVK.

The signal sequence occupies residues methionine 1–glycine 24. Positions serine 23 to proline 42 are disordered. The WAP; atypical domain occupies arginine 27–isoleucine 72. Disulfide bonds link cysteine 43/cysteine 64, cysteine 47/cysteine 59, and cysteine 53/cysteine 68.

This sequence belongs to the venom waprin family. In terms of tissue distribution, expressed by the venom gland.

It localises to the secreted. In terms of biological role, damages membranes of susceptible bacteria. Has no hemolytic activity. Not toxic to mice. Does not inhibit the proteinases elastase and cathepsin G. The sequence is that of Veswaprin-b from Demansia vestigiata (Lesser black whip snake).